Reading from the N-terminus, the 255-residue chain is Phycoerythrobilin:ferredoxin oxidoreductase (255 aa).

The protein belongs to the HY2 family.

The catalysed reaction is (3Z)-phycoerythrobilin + oxidized 2[4Fe-4S]-[ferredoxin] = 15,16-dihydrobiliverdin + reduced 2[4Fe-4S]-[ferredoxin] + 2 H(+). In terms of biological role, catalyzes the two-electron reduction of the C2 and C3(1) diene system of 15,16-dihydrobiliverdin. The polypeptide is Phycoerythrobilin:ferredoxin oxidoreductase (pebB) (Nostoc punctiforme (strain ATCC 29133 / PCC 73102)).